A 196-amino-acid polypeptide reads, in one-letter code: Ras-related protein RabC (196 aa).

13–20 (GESGVGKS) lines the GTP pocket. An Effector region motif is present at residues 35-43 (FAPTLGVDF). GTP contacts are provided by residues 63 to 67 (DTAGQ) and 121 to 124 (NKSD). 2 S-geranylgeranyl cysteine lipidation sites follow: C195 and C196.

Belongs to the small GTPase superfamily. Rab family.

The protein localises to the cell membrane. The polypeptide is Ras-related protein RabC (rabC) (Dictyostelium discoideum (Social amoeba)).